We begin with the raw amino-acid sequence, 393 residues long: Chalcone synthase (393 aa).

Residue Cys164 is part of the active site.

It belongs to the thiolase-like superfamily. Chalcone/stilbene synthases family.

The catalysed reaction is (E)-4-coumaroyl-CoA + 3 malonyl-CoA + 3 H(+) = 2',4,4',6'-tetrahydroxychalcone + 3 CO2 + 4 CoA. The protein operates within secondary metabolite biosynthesis; flavonoid biosynthesis. Its function is as follows. The primary product of this enzyme is 4,2',4',6'-tetrahydroxychalcone (also termed naringenin-chalcone or chalcone) which can under specific conditions spontaneously isomerize into naringenin. This is Chalcone synthase (CHS) from Vitis vinifera (Grape).